The primary structure comprises 315 residues: L-lactate dehydrogenase (315 aa).

Residues V14, D35, and Y66 each coordinate NAD(+). Substrate contacts are provided by residues Q83, R89, and 121–124; that span reads NPVD. Residues 119–121 and S144 contribute to the NAD(+) site; that span reads VAN. 149–152 is a binding site for substrate; the sequence is DTAR. Catalysis depends on H176, which acts as the Proton acceptor. Residue Y221 is modified to Phosphotyrosine. T230 contributes to the substrate binding site.

This sequence belongs to the LDH/MDH superfamily. LDH family. As to quaternary structure, homotetramer.

It is found in the cytoplasm. It catalyses the reaction (S)-lactate + NAD(+) = pyruvate + NADH + H(+). It participates in fermentation; pyruvate fermentation to lactate; (S)-lactate from pyruvate: step 1/1. Catalyzes the conversion of lactate to pyruvate. The polypeptide is L-lactate dehydrogenase (Mesomycoplasma hyopneumoniae (strain 232) (Mycoplasma hyopneumoniae)).